Here is a 223-residue protein sequence, read N- to C-terminus: MTVNIAKMIDHTLLKPEATEEQIIQLCDEAKQHGFASVCVNPAWVKTAARELSDTDVRVCTVIGFPLGATTPETKAFETNNAIENGAREVDMVINIGALKSGNDELVERDIRAVVEAASGKALVKVIIETALLTDEEKVRACQLAVKAGADYVKTSTGFSGGGATVEDVALMRRTVGDKAGVKASGGVRDRKTAEAMIEAGATRIGTSSGVAIVSGQTGGADY.

The active-site Proton donor/acceptor is Asp-91. Residue Lys-154 is the Schiff-base intermediate with acetaldehyde of the active site. Lys-183 functions as the Proton donor/acceptor in the catalytic mechanism.

The protein belongs to the DeoC/FbaB aldolase family. DeoC type 1 subfamily.

It is found in the cytoplasm. The catalysed reaction is 2-deoxy-D-ribose 5-phosphate = D-glyceraldehyde 3-phosphate + acetaldehyde. Its pathway is carbohydrate degradation; 2-deoxy-D-ribose 1-phosphate degradation; D-glyceraldehyde 3-phosphate and acetaldehyde from 2-deoxy-alpha-D-ribose 1-phosphate: step 2/2. Catalyzes a reversible aldol reaction between acetaldehyde and D-glyceraldehyde 3-phosphate to generate 2-deoxy-D-ribose 5-phosphate. This chain is Deoxyribose-phosphate aldolase, found in Geobacillus thermodenitrificans (strain NG80-2).